We begin with the raw amino-acid sequence, 708 residues long: Solute carrier family 15 member 1 (708 aa).

Residues 1–21 (MGMSKSHSFFGYPLSIFFIVV) form a helical membrane-spanning segment. The Extracellular segment spans residues 22–53 (NEFCERFSYYGMRAILILYFTNFISWDDNLST). Asparagine 50 carries an N-linked (GlcNAc...) asparagine glycan. A helical membrane pass occupies residues 54-74 (AIYHTFVALCYLTPILGALIA). Over 75 to 82 (DSWLGKFK) the chain is Cytoplasmic. Residues 83–103 (TIVSLSIVYTIGQAVTSVSSI) form a helical membrane-spanning segment. At 104–118 (NDLTDHNHDGTPDSL) the chain is on the extracellular side. A helical membrane pass occupies residues 119–139 (PVHVVLSLIGLALIALGTGGI). The Cytoplasmic portion of the chain corresponds to 140–161 (KPCVSAFGGDQFEEGQEKQRNR). Residues 162 to 182 (FFSIFYLAINAGSLLSTIITP) traverse the membrane as a helical segment. At 183-198 (MLRVQQCGIHSKQACY) the chain is on the extracellular side. The helical transmembrane segment at 199-219 (PLAFGVPAALMAVALIVFVLG) threads the bilayer. The Cytoplasmic segment spans residues 220 to 276 (SGMYKKFKPQGNIMGKVAKCIGFAIKNRFRHRSKAFPKREHWLDWAKEKYDERLISQ). A helical transmembrane segment spans residues 277-297 (IKMVTRVMFLYIPLPMFWALF). Residues 298 to 327 (DQQGSRWTLQATTMSGKIGALEIQPDQMQT) lie on the Extracellular side of the membrane. A helical transmembrane segment spans residues 328–348 (VNAILIVIMVPIFDAVLYPLI). Residues 349 to 361 (AKCGFNFTSLKKM) are Cytoplasmic-facing. The helical transmembrane segment at 362–382 (AVGMVLASMAFVVAAIVQVEI) threads the bilayer. Over 383-584 (DKTLPVFPKG…SANTVNMALQ (202 aa)) the chain is Extracellular. The tract at residues 383–584 (DKTLPVFPKG…SANTVNMALQ (202 aa)) is extracellular domain (ECD). N-linked (GlcNAc...) asparagine glycosylation is found at asparagine 404, asparagine 408, asparagine 439, asparagine 509, asparagine 514, and asparagine 562. A helical membrane pass occupies residues 585-605 (IPQYFLLTCGEVVFSVTGLEF). At 606–619 (SYSQAPSNMKSVLQ) the chain is on the cytoplasmic side. The helical transmembrane segment at 620 to 640 (AGWLLTVAVGNIIVLIVAGAG) threads the bilayer. At 641–645 (QFSKQ) the chain is on the extracellular side. Residues 646–666 (WAEYILFAALLLVVCVIFAIM) form a helical membrane-spanning segment. Topologically, residues 667 to 708 (ARFYTYINPAEIEAQFDEDEKKNRLEKSNPYFMSGANSQKQM) are cytoplasmic.

The protein belongs to the major facilitator superfamily. Proton-dependent oligopeptide transporter (POT/PTR) (TC 2.A.17) family. In terms of assembly, interacts (via extracellular domain region) with trypsin. Expressed in small intestine.

The protein resides in the apical cell membrane. The catalysed reaction is a dipeptide(out) + H(+)(out) = a dipeptide(in) + H(+)(in). The enzyme catalyses an L-amino acid tripeptide(out) + H(+)(out) = an L-amino acid tripeptide(in) + H(+)(in). It catalyses the reaction L-alanyl-L-lysine(out) + H(+)(out) = L-alanyl-L-lysine(in) + H(+)(in). It carries out the reaction L-alanyl-L-proline(out) + H(+)(out) = L-alanyl-L-proline(in) + H(+)(in). The catalysed reaction is L-alanyl-L-valine(out) + H(+)(out) = L-alanyl-L-valine(in) + H(+)(in). The enzyme catalyses carnosine(out) + H(+)(out) = carnosine(in) + H(+)(in). It catalyses the reaction glycyl-L-glutamine(out) + H(+)(out) = glycyl-L-glutamine(in) + H(+)(in). It carries out the reaction glycyl-L-leucine(out) + H(+)(out) = glycyl-L-leucine(in) + H(+)(in). The catalysed reaction is glycyl-L-proline(out) + H(+)(out) = glycyl-L-proline(in) + H(+)(in). The enzyme catalyses glycyl-sarcosine(out) + H(+)(out) = glycyl-sarcosine(in) + H(+)(in). It catalyses the reaction L-leucyl-L-leucine(out) + H(+)(out) = L-leucyl-L-leucine(in) + H(+)(in). It carries out the reaction L-leucyl-L-proline(out) + H(+)(out) = L-leucyl-L-proline(in) + H(+)(in). The catalysed reaction is L-phenylalanyl-L-leucine(out) + H(+)(out) = L-phenylalanyl-L-leucine(in) + H(+)(in). The enzyme catalyses L-phenylalanyl-L-phenylalanine(out) + H(+)(out) = L-phenylalanyl-L-phenylalanine(in) + H(+)(in). It catalyses the reaction L-lysyl-glycine(out) + H(+)(out) = L-lysyl-glycine(in) + H(+)(in). It carries out the reaction L-tyrosylglycine(out) + H(+)(out) = L-tyrosylglycine(in) + H(+)(in). The catalysed reaction is L-alanyl-L-aspartate(out) + 2 H(+)(out) = L-alanyl-L-aspartate(in) + 2 H(+)(in). The enzyme catalyses L-aspartyl-glycine(out) + 2 H(+)(out) = L-aspartyl-glycine(in) + 2 H(+)(in). It catalyses the reaction glycyl-L-aspartate(out) + 2 H(+)(out) = glycyl-L-aspartate(in) + 2 H(+)(in). It carries out the reaction glycyl-L-glutamate(out) + 2 H(+)(out) = glycyl-L-glutamate(in) + 2 H(+)(in). The catalysed reaction is L-alanyl-L-leucyl-L-alanine(out) + H(+)(out) = L-alanyl-L-leucyl-L-alanine(in) + H(+)(in). The enzyme catalyses L-alanyl-L-prolylglycine(out) + H(+)(out) = L-alanyl-L-prolylglycine(in) + H(+)(in). It catalyses the reaction glycylglycyl-L-isoleucine(out) + H(+)(out) = glycylglycyl-L-isoleucine(in) + H(+)(in). It carries out the reaction glycylglycyl-L-proline(out) + H(+)(out) = glycylglycyl-L-proline(in) + H(+)(in). The catalysed reaction is L-methionyl-L-phenylalanyl-L-methionine(out) + H(+)(out) = L-methionyl-L-phenylalanyl-L-methionine(in) + H(+)(in). The enzyme catalyses N-acetyl-D-muramoyl-L-alanyl-D-isoglutamine(out) + 2 H(+)(out) = N-acetyl-D-muramoyl-L-alanyl-D-isoglutamine(in) + 2 H(+)(in). It catalyses the reaction N(alpha)-formyl-L-methionyl-L-leucyl-L-phenylalanine(out) + 2 H(+)(out) = N(alpha)-formyl-L-methionyl-L-leucyl-L-phenylalanine(in) + 2 H(+)(in). Electrogenic proton-coupled amino-acid transporter that transports oligopeptides of 2 to 4 amino acids with a preference for dipeptides. Transports neutral and monovalently charged peptides with a proton to peptide stoichiometry of 1:1 or 2:1. Primarily responsible for the absorption of dietary di- and tripeptides from the small intestinal lumen. Mediates transepithelial transport of muramyl and N-formylated bacterial dipeptides contributing to recognition of pathogenic bacteria by the mucosal immune system. The protein is Solute carrier family 15 member 1 of Homo sapiens (Human).